The chain runs to 267 residues: Large ribosomal subunit protein uL2c (267 aa).

Belongs to the universal ribosomal protein uL2 family. Part of the 50S ribosomal subunit.

It is found in the plastid. It localises to the apicoplast. This is Large ribosomal subunit protein uL2c (rpl2) from Toxoplasma gondii.